The primary structure comprises 612 residues: Chaperone protein DnaK (612 aa).

Thr-173 is modified (phosphothreonine; by autocatalysis). A compositionally biased stretch (basic and acidic residues) spans 524–544; it reads DDKVSEEDKQKAESAKDELKQ. Disordered stretches follow at residues 524–560 and 572–612; these read DDKVSEEDKQKAESAKDELKQALESGDMEQVKAKKDA and LYEQ…DDKK. The span at 574–586 shows a compositional bias: low complexity; that stretch reads EQVQQEAQQASGE. Over residues 587-612 the composition is skewed to acidic residues; that stretch reads QGEESGNQDDDVVDADYSEVDDDDKK.

This sequence belongs to the heat shock protein 70 family.

In terms of biological role, acts as a chaperone. In Oceanobacillus iheyensis (strain DSM 14371 / CIP 107618 / JCM 11309 / KCTC 3954 / HTE831), this protein is Chaperone protein DnaK.